Reading from the N-terminus, the 489-residue chain is UDP-N-acetylmuramoylalanine--D-glutamate ligase (489 aa).

126 to 132 provides a ligand contact to ATP; sequence GTNGKTT.

This sequence belongs to the MurCDEF family.

It is found in the cytoplasm. The enzyme catalyses UDP-N-acetyl-alpha-D-muramoyl-L-alanine + D-glutamate + ATP = UDP-N-acetyl-alpha-D-muramoyl-L-alanyl-D-glutamate + ADP + phosphate + H(+). It functions in the pathway cell wall biogenesis; peptidoglycan biosynthesis. Cell wall formation. Catalyzes the addition of glutamate to the nucleotide precursor UDP-N-acetylmuramoyl-L-alanine (UMA). The protein is UDP-N-acetylmuramoylalanine--D-glutamate ligase of Mycolicibacterium paratuberculosis (strain ATCC BAA-968 / K-10) (Mycobacterium paratuberculosis).